The sequence spans 132 residues: Small ribosomal subunit protein uS8 (132 aa).

The protein belongs to the universal ribosomal protein uS8 family. Part of the 30S ribosomal subunit. Contacts proteins S5 and S12.

Functionally, one of the primary rRNA binding proteins, it binds directly to 16S rRNA central domain where it helps coordinate assembly of the platform of the 30S subunit. The chain is Small ribosomal subunit protein uS8 from Macrococcus caseolyticus (strain JCSC5402) (Macrococcoides caseolyticum).